A 273-amino-acid polypeptide reads, in one-letter code: Type IV secretion system protein PtlF homolog (273 aa).

The signal sequence occupies residues 1–20 (MMAARMMAAGLAATALSAHA).

This sequence belongs to the TrbG/VirB9 family.

The protein localises to the cell outer membrane. The protein is Type IV secretion system protein PtlF homolog (ptlF) of Bordetella bronchiseptica (strain ATCC BAA-588 / NCTC 13252 / RB50) (Alcaligenes bronchisepticus).